Reading from the N-terminus, the 241-residue chain is Probable septum site-determining protein MinC (241 aa).

Positions proline 109–threonine 135 are disordered.

This sequence belongs to the MinC family. As to quaternary structure, interacts with MinD and FtsZ.

Its function is as follows. Cell division inhibitor that blocks the formation of polar Z ring septums. Rapidly oscillates between the poles of the cell to destabilize FtsZ filaments that have formed before they mature into polar Z rings. Prevents FtsZ polymerization. The protein is Probable septum site-determining protein MinC of Stutzerimonas stutzeri (strain A1501) (Pseudomonas stutzeri).